The following is a 215-amino-acid chain: Vesicle-trafficking protein SEC22b (215 aa).

Residues 2–194 (VLLTMIARVA…KYLNMRSTYA (193 aa)) lie on the Cytoplasmic side of the membrane. Residues 6–119 (MIARVADGLP…YSFIEFDTFI (114 aa)) form the Longin domain. K38 is subject to N6-acetyllysine. The 61-residue stretch at 134–194 (NLGSINTELQ…KYLNMRSTYA (61 aa)) folds into the v-SNARE coiled-coil homology domain. S137 is modified (phosphoserine). T140 bears the Phosphothreonine mark. 4 positions are modified to phosphoserine: S164, S168, S174, and S177. The chain crosses the membrane as a helical; Anchor for type IV membrane protein span at residues 195–215 (KLAAVAVFFIMLIVYVRFWWL).

Belongs to the synaptobrevin family. As to quaternary structure, interacts with STX17. Component of two distinct SNARE complexes consisting of STX5, GOSR2/BOS1, BET1 and SEC22B or STX18, USE1L, BNIP1/SEC20L and SEC22B. YKT6 can probably replace SEC22B in either complex. Interacts with the COPII Sec23/24 complex composed of SEC23A and SEC24A; recruits SEC22B into COPII-coated vesicles to allow its transport from the endoplasmic reticulum to the Golgi. Interacts with BET1.

The protein localises to the endoplasmic reticulum membrane. It localises to the endoplasmic reticulum-Golgi intermediate compartment membrane. The protein resides in the golgi apparatus. Its subcellular location is the cis-Golgi network membrane. It is found in the trans-Golgi network membrane. The protein localises to the melanosome. In terms of biological role, SNARE involved in targeting and fusion of ER-derived transport vesicles with the Golgi complex as well as Golgi-derived retrograde transport vesicles with the ER. The protein is Vesicle-trafficking protein SEC22b (SEC22B) of Homo sapiens (Human).